The primary structure comprises 151 residues: Small ribosomal subunit protein uS15 (151 aa).

The protein belongs to the universal ribosomal protein uS15 family.

The protein is Small ribosomal subunit protein uS15 (RPS13) of Lumbricus rubellus (Humus earthworm).